The sequence spans 547 residues: Chaperonin GroEL 3 (547 aa).

ATP is bound by residues 30-33 (TLGP), K51, 87-91 (DGTTT), G415, and D496.

This sequence belongs to the chaperonin (HSP60) family. Forms a cylinder of 14 subunits composed of two heptameric rings stacked back-to-back. Interacts with the co-chaperonin GroES.

Its subcellular location is the cytoplasm. It catalyses the reaction ATP + H2O + a folded polypeptide = ADP + phosphate + an unfolded polypeptide.. Together with its co-chaperonin GroES, plays an essential role in assisting protein folding. The GroEL-GroES system forms a nano-cage that allows encapsulation of the non-native substrate proteins and provides a physical environment optimized to promote and accelerate protein folding. The protein is Chaperonin GroEL 3 of Bradyrhizobium sp. (strain ORS 278).